The chain runs to 156 residues: Small ribosomal subunit protein uS7 (156 aa).

This sequence belongs to the universal ribosomal protein uS7 family. Part of the 30S ribosomal subunit. Contacts proteins S9 and S11.

Its function is as follows. One of the primary rRNA binding proteins, it binds directly to 16S rRNA where it nucleates assembly of the head domain of the 30S subunit. Is located at the subunit interface close to the decoding center, probably blocks exit of the E-site tRNA. In Parasynechococcus marenigrum (strain WH8102), this protein is Small ribosomal subunit protein uS7.